Reading from the N-terminus, the 1580-residue chain is Endoribonuclease Dicer homolog 3 (1580 aa).

Residues Met-1 to Glu-12 show a composition bias toward basic and acidic residues. A disordered region spans residues Met-1–Lys-22. The Helicase ATP-binding domain occupies Val-51–Ser-223. Leu-64–Ser-71 provides a ligand contact to ATP. The short motif at Asp-170–His-173 is the DECH box element. A Helicase C-terminal domain is found at Lys-394–His-562. Residues Glu-581–Glu-597 show a composition bias toward polar residues. 2 disordered regions span residues Glu-581–Pro-601 and Gln-613–Lys-638. Residues Ser-622–Gly-633 are compositionally biased toward low complexity. In terms of domain architecture, PAZ spans Asn-836 to Asp-960. 2 consecutive RNase III domains span residues Ala-985–Gly-1157 and Leu-1198–Arg-1340. Mg(2+) contacts are provided by Glu-1234, Asp-1326, and Glu-1329.

This sequence belongs to the helicase family. Dicer subfamily. Interacts with DRB2 and DRB5. Requires Mg(2+) as cofactor. The cofactor is Mn(2+).

The protein resides in the nucleus. It is found in the nucleolus. Its function is as follows. Ribonuclease (RNase) III involved in RNA-mediated post-transcriptional gene silencing (PTGS). Involved in the processing of repeat-associated small interfering RNAs (ra-siRNAs, derived from heterochromatin and DNA repeats such as transposons) by cleaving small dsRNAs into 24 nucleotide ra-siRNAs. Plays a role in antiviral RNA silencing. Involved in the production of viral siRNAs derived from the cabbage leaf curl virus (CaLCuV) and tobacco rattle virus (TRV). Targeted by the viral silencing suppressor (VSR) protein 2b of the cucumber mosaic virus (CMV) that inactivates DCL3 function in RNA silencing. Acts redundantly with DICER-LIKE 1 (DCL1) to promote flowering via repression of FLOWERING LOCUS C (FLC). Does not seem to be involved in microRNAs (miRNAs) processing. The chain is Endoribonuclease Dicer homolog 3 (DCL3) from Arabidopsis thaliana (Mouse-ear cress).